We begin with the raw amino-acid sequence, 900 residues long: DNA mismatch repair protein MutS (900 aa).

Positions 1–88 (MPGPSDDPTE…PAWAHHSQVD (88 aa)) are disordered. Over residues 56–68 (APADHNAADHDSN) the composition is skewed to basic and acidic residues. 714–721 (GPNASGKS) lines the ATP pocket.

This sequence belongs to the DNA mismatch repair MutS family.

In terms of biological role, this protein is involved in the repair of mismatches in DNA. It is possible that it carries out the mismatch recognition step. This protein has a weak ATPase activity. The protein is DNA mismatch repair protein MutS of Parasynechococcus marenigrum (strain WH8102).